We begin with the raw amino-acid sequence, 313 residues long: Ribosomal protein L11 methyltransferase (313 aa).

Residues Thr-163, Gly-184, Asp-206, and Asn-249 each contribute to the S-adenosyl-L-methionine site.

The protein belongs to the methyltransferase superfamily. PrmA family.

The protein localises to the cytoplasm. It carries out the reaction L-lysyl-[protein] + 3 S-adenosyl-L-methionine = N(6),N(6),N(6)-trimethyl-L-lysyl-[protein] + 3 S-adenosyl-L-homocysteine + 3 H(+). Functionally, methylates ribosomal protein L11. This is Ribosomal protein L11 methyltransferase from Brevibacillus brevis (strain 47 / JCM 6285 / NBRC 100599).